We begin with the raw amino-acid sequence, 487 residues long: MSYVIEGTTGAWELVIGLEVHAQVISRSKLFSGAATAFGAEPNSQVSFVDAGFPGMLPVINRECVAQAVRTGLGLAAHINLVSRFDRKNYFYADLPQGYQISQYEHPIVGAGAIEIELESGETRTIGITRLHLEQDAGKSMHDQHPSKSLIDLNRSGVALMEIVSEPDMRSPEEAGAYLRKLRTILRYLGTCDGNMDEGSMRADVNVSVRKHGEPFRTRCEIKNVNSIRFVMQAIEAEAKRQIEIWEAGGTVDQETRLFEPARGVTRSMRSKEDAHDYRYFPEPDLLPLVLEEEWVESLKATLPELPDAKRARLMRDFGLSRYEASIFVMEQVTADFFETVAAGRDAKLVANWMLGDFFAHLNRTGTSIETSPVTAARLGELLDLITDKTINGKIAKEVLELMFDTGDAAGAIVEARGLKQVTDTGAIDEAIDRVVAANADKLAEYKAGKDKLFGFFVGQVMKAMQGKGNPALVNEALKRKIGEPGA.

It belongs to the GatB/GatE family. GatB subfamily. As to quaternary structure, heterotrimer of A, B and C subunits.

It carries out the reaction L-glutamyl-tRNA(Gln) + L-glutamine + ATP + H2O = L-glutaminyl-tRNA(Gln) + L-glutamate + ADP + phosphate + H(+). The enzyme catalyses L-aspartyl-tRNA(Asn) + L-glutamine + ATP + H2O = L-asparaginyl-tRNA(Asn) + L-glutamate + ADP + phosphate + 2 H(+). Functionally, allows the formation of correctly charged Asn-tRNA(Asn) or Gln-tRNA(Gln) through the transamidation of misacylated Asp-tRNA(Asn) or Glu-tRNA(Gln) in organisms which lack either or both of asparaginyl-tRNA or glutaminyl-tRNA synthetases. The reaction takes place in the presence of glutamine and ATP through an activated phospho-Asp-tRNA(Asn) or phospho-Glu-tRNA(Gln). The polypeptide is Aspartyl/glutamyl-tRNA(Asn/Gln) amidotransferase subunit B (Acidiphilium cryptum (strain JF-5)).